The sequence spans 356 residues: Xylose/arabinose import permease protein XylH (356 aa).

10 helical membrane-spanning segments follow: residues 14–34 (LFLVNVIIALFFYFENSAYFS), 41–61 (IFQYLAEIGIIAIGEAMLMLC), 70–90 (ALANFVPLITLTIYNSIYQAI), 96–116 (IVVSILLSLGLASLIGLMNGL), 126–146 (LITTVGTLFLFNGIALIYSGG), 161–181 (VSILPVPFIWSLGALVFLILL), 211–231 (VKIINFIIMANIGALVGIIQG), 242–262 (FTADVVLEGIAAAVIGGTSLV), 266–286 (GSLVGAFLGSVFISELLNGFN), and 287–307 (ILGINAYEFDAILGGAIVVVM).

This sequence belongs to the binding-protein-dependent transport system permease family. The complex is composed of two ATP-binding proteins (XylG), two transmembrane proteins (XylH) and a solute-binding protein (XylF).

It is found in the cell membrane. In terms of biological role, part of the ABC transporter complex XylFGH involved in the uptake of xylose and arabinose. Responsible for the translocation of the substrate across the membrane. This is Xylose/arabinose import permease protein XylH from Sulfolobus acidocaldarius (strain ATCC 33909 / DSM 639 / JCM 8929 / NBRC 15157 / NCIMB 11770).